The sequence spans 148 residues: Protein Turandot Z (148 aa).

The N-terminal stretch at 1 to 23 is a signal peptide; sequence MYFAIRLSFVLAVLFCLTGNGSA.

Belongs to the Turandot family.

The protein localises to the secreted. Functionally, a humoral factor that may play a role in stress tolerance. The protein is Protein Turandot Z of Drosophila simulans (Fruit fly).